We begin with the raw amino-acid sequence, 466 residues long: Argininosuccinate lyase (466 aa).

3 residues coordinate 2-(N(omega)-L-arginino)succinate: serine 27, asparagine 114, and threonine 159. Residue histidine 160 is the Proton acceptor of the active site. Catalysis depends on serine 281, which acts as the Proton donor. 2-(N(omega)-L-arginino)succinate-binding residues include asparagine 289, tyrosine 321, glutamine 326, and lysine 329.

This sequence belongs to the lyase 1 family. Argininosuccinate lyase subfamily. In terms of assembly, homotetramer. In terms of tissue distribution, eye lens.

The catalysed reaction is 2-(N(omega)-L-arginino)succinate = fumarate + L-arginine. The protein operates within amino-acid biosynthesis; L-arginine biosynthesis; L-arginine from L-ornithine and carbamoyl phosphate: step 3/3. In terms of biological role, delta crystallin, the principal crystallin in embryonic lens, is found only in birds and reptiles. This protein also functions as an enzymatically active argininosuccinate lyase. This is Argininosuccinate lyase (ASL) from Anser anser anser (Western greylag goose).